The primary structure comprises 346 residues: MSELKQKQIFSEKALEKEQQSDSPELTAQKTFSEKETFVPVKIEEDRIETEQELQLEHVIRPRPGRKWLATSVFATFAGLVGWQAVDSVVTAVQTADWLALGWVGFITAVASLGLGAIGKELWKLRKLRNHFSIQEEAELLVHSDSVGKGKVFCEKVAEESGVLAENPGFDRWQNSINPAHSDAEILDMYDSMVVSQQDKLATKVVSQHATESAALVAVSPLAAADMLLVAWRNFKMIDNLSKVYGVELGYASRIKLLRAVFVNMAAAGASELAIDAGMDLMSMDLAGKVSARAGQGLGVGILTARLGLKAMALLRPLPWYPDRQVKLGTIRKAVVAKVASITMKP.

The interval 1-30 (MSELKQKQIFSEKALEKEQQSDSPELTAQK) is disordered. The span at 21 to 30 (SDSPELTAQK) shows a compositional bias: polar residues. Helical transmembrane passes span 73 to 93 (VFAT…VTAV) and 98 to 118 (WLAL…LGAI).

Belongs to the UPF0283 family.

Its subcellular location is the cell inner membrane. In Vibrio parahaemolyticus serotype O3:K6 (strain RIMD 2210633), this protein is UPF0283 membrane protein VP1870.